Here is a 155-residue protein sequence, read N- to C-terminus: Ribosomal RNA large subunit methyltransferase H (155 aa).

S-adenosyl-L-methionine is bound by residues Leu-72, Gly-103, and 122-127; that span reads LSDLTL.

The protein belongs to the RNA methyltransferase RlmH family. In terms of assembly, homodimer.

Its subcellular location is the cytoplasm. The enzyme catalyses pseudouridine(1915) in 23S rRNA + S-adenosyl-L-methionine = N(3)-methylpseudouridine(1915) in 23S rRNA + S-adenosyl-L-homocysteine + H(+). Specifically methylates the pseudouridine at position 1915 (m3Psi1915) in 23S rRNA. This is Ribosomal RNA large subunit methyltransferase H from Acidovorax ebreus (strain TPSY) (Diaphorobacter sp. (strain TPSY)).